We begin with the raw amino-acid sequence, 145 residues long: MANAEKTSSGSDIDEKKRKRKLSNRESARRSRLKKQKLMEDTIHEISSLERRIKENSERCRAVKQRLDSVETENAGLRSEKIWLSSYVSDLENMIATTSLTLTQSGGGDCVDDQNANAGIAVGDCRRTPWKLSCGSLQPMASFKT.

Polar residues predominate over residues 1–11; that stretch reads MANAEKTSSGS. A disordered region spans residues 1–39; that stretch reads MANAEKTSSGSDIDEKKRKRKLSNRESARRSRLKKQKLM. The 64-residue stretch at 14–77 folds into the bZIP domain; sequence DEKKRKRKLS…DSVETENAGL (64 aa). Residues 16 to 37 form a basic motif region; the sequence is KKRKRKLSNRESARRSRLKKQK. The tract at residues 46–53 is leucine-zipper; that stretch reads ISSLERRI.

This sequence belongs to the bZIP family. As to quaternary structure, interacts with ZFP7, BZIP4, BZIP9, BZIP10, BZIP11, BZIP25, BZIP42, BZIP44, BZIP53, BZIP58 and BZIP63. Expressed in both shoots, including young leaves, stipulae and trichomes (except in cotyledons and hypocotyl), and roots, including vascular tissues (e.g. in both the phloem and the xylem). Present in seeds and pollen. Restricted to vasculatures and roots in the presence of sucrose or glucose.

It localises to the nucleus. Functionally, transcription factor that binds to the C-box-like motif (5'-TGCTGACGTCA-3') and G-box-like motif (5'-CCACGTGGCC-3'), ABRE elements, of gene promoters involved in sugar signaling. Activated by low energy stress both at transcriptional and post-transcriptional mechanisms. Promotes dark-induced senescence and participates in the transcriptional reprogramming of amino acid metabolism during the dark-induced starvation response. Transcription activator of the mannan synthase CSLA9. Recognizes and binds to DNA-specific sequence of CSLA9 promoter. The chain is Basic leucine zipper 1 (BZIP1) from Arabidopsis thaliana (Mouse-ear cress).